A 394-amino-acid chain; its full sequence is Chaperone protein DnaJ (394 aa).

Positions 4–68 (DYYEILGVSR…ELKARYDRFG (65 aa)) constitute a J domain. The CR-type zinc-finger motif lies at 136-218 (GGEKQIRISH…CNGEGLAQTT (83 aa)). The Zn(2+) site is built by Cys-149, Cys-152, Cys-166, Cys-169, Cys-192, Cys-195, Cys-206, and Cys-209. 4 CXXCXGXG motif repeats span residues 149-156 (CNVCGGSG), 166-173 (CPTCGGSG), 192-199 (CPTCGGSG), and 206-213 (CYNCNGEG).

It belongs to the DnaJ family. As to quaternary structure, homodimer. It depends on Zn(2+) as a cofactor.

The protein resides in the cytoplasm. Participates actively in the response to hyperosmotic and heat shock by preventing the aggregation of stress-denatured proteins and by disaggregating proteins, also in an autonomous, DnaK-independent fashion. Unfolded proteins bind initially to DnaJ; upon interaction with the DnaJ-bound protein, DnaK hydrolyzes its bound ATP, resulting in the formation of a stable complex. GrpE releases ADP from DnaK; ATP binding to DnaK triggers the release of the substrate protein, thus completing the reaction cycle. Several rounds of ATP-dependent interactions between DnaJ, DnaK and GrpE are required for fully efficient folding. Also involved, together with DnaK and GrpE, in the DNA replication of plasmids through activation of initiation proteins. This Synechococcus sp. (strain JA-2-3B'a(2-13)) (Cyanobacteria bacterium Yellowstone B-Prime) protein is Chaperone protein DnaJ.